The sequence spans 623 residues: Glutathione import ATP-binding protein GsiA (623 aa).

ABC transporter domains follow at residues 15–269 (VSGL…QTLL) and 325–564 (LRSG…RKLM). Residues 49–56 (GESGSGKS) and 357–364 (GESGSGKS) contribute to the ATP site.

Belongs to the ABC transporter superfamily. Glutathione importer (TC 3.A.1.5.11) family. In terms of assembly, the complex is composed of two ATP-binding proteins (GsiA), two transmembrane proteins (GsiC and GsiD) and a solute-binding protein (GsiB).

The protein localises to the cell inner membrane. It catalyses the reaction glutathione(out) + ATP + H2O = glutathione(in) + ADP + phosphate + H(+). In terms of biological role, part of the ABC transporter complex GsiABCD involved in glutathione import. Responsible for energy coupling to the transport system. In Salmonella choleraesuis (strain SC-B67), this protein is Glutathione import ATP-binding protein GsiA.